The sequence spans 364 residues: Methylthioribose-1-phosphate isomerase (364 aa).

Residues 49 to 51, arginine 89, and glutamine 201 contribute to the substrate site; that span reads RGA. Residue aspartate 242 is the Proton donor of the active site. Residue 252 to 253 participates in substrate binding; it reads NK.

Belongs to the eIF-2B alpha/beta/delta subunits family. MtnA subfamily.

It catalyses the reaction 5-(methylsulfanyl)-alpha-D-ribose 1-phosphate = 5-(methylsulfanyl)-D-ribulose 1-phosphate. Its pathway is amino-acid biosynthesis; L-methionine biosynthesis via salvage pathway; L-methionine from S-methyl-5-thio-alpha-D-ribose 1-phosphate: step 1/6. Its function is as follows. Catalyzes the interconversion of methylthioribose-1-phosphate (MTR-1-P) into methylthioribulose-1-phosphate (MTRu-1-P). The chain is Methylthioribose-1-phosphate isomerase from Leptospira interrogans serogroup Icterohaemorrhagiae serovar Lai (strain 56601).